Consider the following 51-residue polypeptide: Magnetosome protein Mms5 (51 aa).

The Lumenal portion of the chain corresponds to 1 to 12; the sequence is MLSAKGVSLGLG. Residues 9-16 are LG region; that stretch reads LGLGLGLG. The chain crosses the membrane as a helical span at residues 13-33; the sequence is LGLGAWGPVLLGVVGVAGAIA. Topologically, residues 34 to 51 are cytoplasmic; the sequence is LYGYYKNRNAEPAAAEAV.

It belongs to the magnetosome MamD/Mms5 family. Post-translationally, seen in gels as a band of about 5 kDa, with an N-terminus that corresponds to residue 8, suggesting it may undergo N-terminal cleavage.

Its subcellular location is the magnetosome membrane. Might be involved in magnetite crystal growth. The protein is Magnetosome protein Mms5 of Paramagnetospirillum magneticum (strain ATCC 700264 / AMB-1) (Magnetospirillum magneticum).